A 252-amino-acid polypeptide reads, in one-letter code: MLREVTITRAIVESYYRDLLNNLELDVAIVGAGPSGMVAAYYLAKGGAKVAIFEKKLSIGGGIWGGGMGFNKVVVQDEAREILDEFGIRYEEFEKGYYVADAIEVATTIASKVVKSGVKIFNMIEVEDLVIKDNRVSGIVINWTPVLMAGLHVDPLTIEAKYVIDSTGHGAQVAQFLVKRGLLKEIPGEGAMWAEQGEKLTVKNTREVFPGLYVTGMAANAIAGAPRMGPIFGGMFLSGRKAAQEILKKLKS.

Residues Ser-35, 54 to 55, Gly-62, Val-126, and 152 to 154 contribute to the NAD(+) site; these read EK and HVD. Fe cation is bound by residues Asp-154 and His-169. Met-217 lines the NAD(+) pocket. Position 227 (Arg-227) interacts with glycine.

This sequence belongs to the THI4 family. As to quaternary structure, homooctamer; tetramer of dimers. Requires Fe(2+) as cofactor.

The enzyme catalyses hydrogen sulfide + glycine + NAD(+) = ADP-5-ethyl-4-methylthiazole-2-carboxylate + nicotinamide + 3 H2O + H(+). The protein operates within cofactor biosynthesis; thiamine diphosphate biosynthesis. Functionally, involved in the biosynthesis of the thiazole moiety of thiamine. Catalyzes the conversion of NAD and glycine to adenosine diphosphate 5-(2-hydroxyethyl)-4-methylthiazole-2-carboxylate (ADT), an adenylated thiazole intermediate, using free sulfide as a source of sulfur. This Pyrococcus horikoshii (strain ATCC 700860 / DSM 12428 / JCM 9974 / NBRC 100139 / OT-3) protein is Thiamine thiazole synthase.